The sequence spans 552 residues: Cycloheximide resistance protein (552 aa).

A disordered region spans residues 46–70; the sequence is VLNSSDKSQSSENKEQTEGDQATIQ. The span at 47 to 56 shows a compositional bias: polar residues; sequence LNSSDKSQSS. 12 helical membrane-spanning segments follow: residues 100–120, 137–157, 168–188, 194–213, 225–246, 262–282, 346–362, 381–399, 419–439, 445–464, 477–494, and 518–539; these read AIAA…SAIY, LATL…LFWS, TPLY…TALS, LSVL…STGG, YSIA…GPLI, WSFW…SFSL, IYIA…FESV, YVST…LPTV, LPPA…FGWT, NWFV…FIIF, VEYL…RSVS, and WGSS…FFYL.

The protein belongs to the major facilitator superfamily. CAR1 family.

The protein resides in the membrane. Its function is as follows. Probable transporter. Confers resistance to cycloheximide. The protein is Cycloheximide resistance protein (CYHR) of Candida maltosa (Yeast).